A 199-amino-acid polypeptide reads, in one-letter code: 3-isopropylmalate dehydratase small subunit (199 aa).

This sequence belongs to the LeuD family. LeuD type 1 subfamily. Heterodimer of LeuC and LeuD.

It catalyses the reaction (2R,3S)-3-isopropylmalate = (2S)-2-isopropylmalate. Its pathway is amino-acid biosynthesis; L-leucine biosynthesis; L-leucine from 3-methyl-2-oxobutanoate: step 2/4. Its function is as follows. Catalyzes the isomerization between 2-isopropylmalate and 3-isopropylmalate, via the formation of 2-isopropylmaleate. The sequence is that of 3-isopropylmalate dehydratase small subunit from Aeromonas hydrophila subsp. hydrophila (strain ATCC 7966 / DSM 30187 / BCRC 13018 / CCUG 14551 / JCM 1027 / KCTC 2358 / NCIMB 9240 / NCTC 8049).